A 1152-amino-acid chain; its full sequence is Syntaxin-binding protein 5 (1152 aa).

Residues 14–35 (TAGSSSASQQQQQQQHPPGNRE) are disordered. Over residues 17 to 28 (SSSASQQQQQQQ) the composition is skewed to low complexity. WD repeat units lie at residues 62–95 (SALA…CYCQ), 102–141 (VIQL…SLKF), 146–182 (VTFC…GYVI), 201–235 (HISD…DYRY), 241–273 (IHSV…PTKP), 295–337 (PILK…KSTA), 345–379 (IVDF…LIDL), 401–478 (TCCE…YKLK), 506–620 (QIIS…ELVI), and 634–696 (TSLA…SGAG). 2 disordered regions span residues 557 to 596 (TPEG…GLRD) and 675 to 731 (SNDP…QKVN). Serine 693 carries the post-translational modification Phosphoserine. Residues 713-722 (SPTSGSSSPH) are compositionally biased toward low complexity. A Phosphoserine; by PKA modification is found at serine 724. Phosphoserine is present on serine 760. A Phosphothreonine modification is found at threonine 763. The residue at position 783 (serine 783) is a Phosphoserine. The residue at position 785 (threonine 785) is a Phosphothreonine. Serine 786 bears the Phosphoserine mark. WD repeat units lie at residues 795 to 852 (ISAL…SGTI), 861 to 935 (RMAF…QNCA), 940 to 984 (ITET…LDVY), and 998 to 1021 (CFAN…TYSQ). Positions 879–893 (WTEHNVPEEKDEKEK) are enriched in basic and acidic residues. A disordered region spans residues 879–907 (WTEHNVPEEKDEKEKLKKRRPVSVSPSSS). Phosphoserine occurs at positions 901 and 903. Threonine 1040 is subject to Phosphothreonine. A phosphoserine mark is found at serine 1059 and serine 1132. Positions 1087-1147 (GIEGVKGAAS…HEMMLKYKDK (61 aa)) constitute a v-SNARE coiled-coil homology domain.

The protein belongs to the WD repeat L(2)GL family. In terms of assembly, part of a complex that contains STXBP5, STX4A and SNAP23. Interacts with STX1A and STX4A via its v-SNARE homology domain. Part of a complex that contains STX1, STXBP5, SNAP25 and SYT1. Phosphorylation by PKA reduces interaction with STX1A and enhances synaptic neurotransmitter release. Isoform 1 is detected in heart, brain, lung, liver, skeletal muscle, kidney and testis. Isoform 2 is detected in brain and in testis. Isoform 3 is detected in testis.

It localises to the cytoplasm. Its subcellular location is the cell membrane. The protein localises to the cytoplasmic vesicle membrane. It is found in the synapse. The protein resides in the cytoplasmic vesicle. It localises to the secretory vesicle. Its subcellular location is the synaptic vesicle. Its function is as follows. Inhibits translocation of GLUT4 from intracellular vesicles to the plasma membrane. Plays a regulatory role in calcium-dependent exocytosis and neurotransmitter release. Inhibits membrane fusion between transport vesicles and the plasma membrane. May modulate the assembly of trans-SNARE complexes between transport vesicles and the plasma membrane. Competes with STXBP1 for STX1 binding. In Rattus norvegicus (Rat), this protein is Syntaxin-binding protein 5 (Stxbp5).